Here is a 451-residue protein sequence, read N- to C-terminus: Protein naked cuticle homolog 2 (451 aa).

Positions 1–108 (MGKLQSKHAA…PRGPGGQRLN (108 aa)) are disordered. The N-myristoyl glycine moiety is linked to residue Gly2. A targeting to the basolateral cell membrane region spans residues 2-173 (GKLQSKHAAA…GSSKTLRVKL (172 aa)). Composition is skewed to basic and acidic residues over residues 34–63 (KGAE…REDQ) and 89–99 (DGERAANREGP). Residues 113–178 (QCDVSVEEDD…LRVKLTVSPE (66 aa)) are interaction with DVL1, DVL2 and DVL3. An EF-hand domain is found at 119–154 (EEDDRQEWTFTLYDFDNCGKVTREDMSSLMHTIYEV). 4 residues coordinate Ca(2+): Asp132, Asp134, Lys138, and Asp143. Disordered stretches follow at residues 162–237 (SSGS…PYCV) and 256–408 (YTSR…TVEH). Over residues 180 to 215 (SSKRKEGPPAGQDREPTRCRMEGELAEEPRVADRRL) the composition is skewed to basic and acidic residues. An interaction with TGFA region spans residues 300–385 (QVLVEHVVPA…PPPPYGHKRY (86 aa)). The span at 332–351 (KSPKGSGKPPGVPASSKSGK) shows a compositional bias: low complexity.

Belongs to the NKD family. In terms of assembly, interacts with DVL1, DVL2, DVL3 and PPP2R3A. Interacts with RNF25 and TGFA (via cytoplasmic domain). Post-translationally, ubiquitinated, leading to rapid proteasomal degradation. Interaction with TGFA interferes with RNF25 binding and protects against ubiquitination mediated by RNF25. Expressed in kidney, lung, pancreas and spleen.

The protein localises to the cell membrane. Its subcellular location is the cytoplasm. The protein resides in the cytoplasmic vesicle. In terms of biological role, cell autonomous antagonist of the canonical Wnt signaling pathway. May activate a second Wnt signaling pathway that controls planar cell polarity. Required for processing of TGFA and for targeting of TGFA to the basolateral membrane of polarized epithelial cells. The protein is Protein naked cuticle homolog 2 (NKD2) of Homo sapiens (Human).